The sequence spans 196 residues: Probable nicotinate-nucleotide adenylyltransferase (196 aa).

This sequence belongs to the NadD family.

It carries out the reaction nicotinate beta-D-ribonucleotide + ATP + H(+) = deamido-NAD(+) + diphosphate. The protein operates within cofactor biosynthesis; NAD(+) biosynthesis; deamido-NAD(+) from nicotinate D-ribonucleotide: step 1/1. Catalyzes the reversible adenylation of nicotinate mononucleotide (NaMN) to nicotinic acid adenine dinucleotide (NaAD). In Caldicellulosiruptor saccharolyticus (strain ATCC 43494 / DSM 8903 / Tp8T 6331), this protein is Probable nicotinate-nucleotide adenylyltransferase.